Reading from the N-terminus, the 558-residue chain is Ankyrin repeat protein OPG189 (558 aa).

ANK repeat units lie at residues 65–95, 169–205, 209–239, 243–272, 276–304, 339–368, and 372–401; these read YGEN…NINK, YGCT…DVDK, YGNT…NIDS, NRYT…NVNA, FGTT…ELEI, YNET…DFET, and SGCT…SLKI.

This sequence belongs to the orthopoxvirus OPG189 protein family.

Functionally, contributes to viral release without involving rearrangement of host actin. The polypeptide is Ankyrin repeat protein OPG189 (OPG189) (Vaccinia virus (strain Western Reserve) (VACV)).